Consider the following 82-residue polypeptide: Small ribosomal subunit protein uS17 (82 aa).

Belongs to the universal ribosomal protein uS17 family. In terms of assembly, part of the 30S ribosomal subunit.

Functionally, one of the primary rRNA binding proteins, it binds specifically to the 5'-end of 16S ribosomal RNA. The chain is Small ribosomal subunit protein uS17 from Afipia carboxidovorans (strain ATCC 49405 / DSM 1227 / KCTC 32145 / OM5) (Oligotropha carboxidovorans).